We begin with the raw amino-acid sequence, 241 residues long: Putative ABC transporter ATP-binding protein CA_C0773 (241 aa).

In terms of domain architecture, ABC transporter spans 2–241; it reads IKLEKVSFTY…REFLMECNII (240 aa). 34–41 is a binding site for ATP; the sequence is GPNGSGKS.

It belongs to the ABC transporter superfamily.

It is found in the cell membrane. In terms of biological role, probably part of an ABC transporter complex. Responsible for energy coupling to the transport system. The sequence is that of Putative ABC transporter ATP-binding protein CA_C0773 from Clostridium acetobutylicum (strain ATCC 824 / DSM 792 / JCM 1419 / IAM 19013 / LMG 5710 / NBRC 13948 / NRRL B-527 / VKM B-1787 / 2291 / W).